A 318-amino-acid polypeptide reads, in one-letter code: Methionyl-tRNA formyltransferase (318 aa).

Residue 110–113 participates in (6S)-5,6,7,8-tetrahydrofolate binding; sequence SLLP.

This sequence belongs to the Fmt family.

It carries out the reaction L-methionyl-tRNA(fMet) + (6R)-10-formyltetrahydrofolate = N-formyl-L-methionyl-tRNA(fMet) + (6S)-5,6,7,8-tetrahydrofolate + H(+). Functionally, attaches a formyl group to the free amino group of methionyl-tRNA(fMet). The formyl group appears to play a dual role in the initiator identity of N-formylmethionyl-tRNA by promoting its recognition by IF2 and preventing the misappropriation of this tRNA by the elongation apparatus. The chain is Methionyl-tRNA formyltransferase from Latilactobacillus sakei subsp. sakei (strain 23K) (Lactobacillus sakei subsp. sakei).